A 734-amino-acid chain; its full sequence is Predicted GPI-anchored protein 49 (734 aa).

A signal peptide spans 1–16 (MNYITSLLLLSSNTFL). N-linked (GlcNAc...) asparagine glycosylation is found at Asn-27, Asn-56, Asn-68, and Asn-71. Positions 78–145 (DNSDTDIDDS…NESDTQNEND (68 aa)) are disordered. Over residues 87–98 (SSSNSEDVSSND) the composition is skewed to low complexity. N-linked (GlcNAc...) asparagine glycans are attached at residues Asn-105, Asn-118, Asn-136, and Asn-180. The span at 110–129 (FSDESDEGNDSDDNGDEVEN) shows a compositional bias: acidic residues. Polar residues predominate over residues 130–141 (MENNQANESDTQ). 2 disordered regions span residues 216 to 262 (SPKS…LKSK) and 331 to 360 (DANPTEEYDSGDGKENTQQNPIPEKMRLPT). Basic residues predominate over residues 228-259 (SRKKTLKSKSKSKSSKLKHKSRKSHKRRPKLL). 2 N-linked (GlcNAc...) asparagine glycosylation sites follow: Asn-388 and Asn-427. Residues 447–479 (PPRYSNHHSEFTVERPPRPSRTKKRPRIKAKKT) are disordered. The span at 453-463 (HHSEFTVERPP) shows a compositional bias: basic and acidic residues. The span at 464 to 479 (RPSRTKKRPRIKAKKT) shows a compositional bias: basic residues. An N-linked (GlcNAc...) asparagine glycan is attached at Asn-517. Residues 582-653 (KPQETKLHSP…STTSTKPNDQ (72 aa)) form a disordered region. Residues 592–611 (TSTDTKSSKLMSSSSSNNNK) are compositionally biased toward low complexity. Polar residues predominate over residues 620 to 631 (EYNQTQESTSYN). N-linked (GlcNAc...) asparagine glycans are attached at residues Asn-622 and Asn-631. A compositionally biased stretch (low complexity) spans 632–650 (TTKAVPKTSVVSSTTSTKP). Residue Ser-707 is the site of GPI-anchor amidated serine attachment. A propeptide spans 708 to 734 (ASQNLSFSVLGLIILLLLLPGLLIIIM) (removed in mature form). The N-linked (GlcNAc...) asparagine glycan is linked to Asn-711.

Its subcellular location is the cell membrane. The chain is Predicted GPI-anchored protein 49 (PGA49) from Candida albicans (strain SC5314 / ATCC MYA-2876) (Yeast).